Here is a 172-residue protein sequence, read N- to C-terminus: Methylated-DNA--protein-cysteine methyltransferase (172 aa).

Residue Cys-142 is the Nucleophile; methyl group acceptor of the active site.

Belongs to the MGMT family.

The protein localises to the cytoplasm. The enzyme catalyses a 6-O-methyl-2'-deoxyguanosine in DNA + L-cysteinyl-[protein] = S-methyl-L-cysteinyl-[protein] + a 2'-deoxyguanosine in DNA. It catalyses the reaction a 4-O-methyl-thymidine in DNA + L-cysteinyl-[protein] = a thymidine in DNA + S-methyl-L-cysteinyl-[protein]. In terms of biological role, involved in the cellular defense against the biological effects of O6-methylguanine (O6-MeG) and O4-methylthymine (O4-MeT) in DNA. Repairs the methylated nucleobase in DNA by stoichiometrically transferring the methyl group to a cysteine residue in the enzyme. This is a suicide reaction: the enzyme is irreversibly inactivated. The protein is Methylated-DNA--protein-cysteine methyltransferase of Pyrococcus horikoshii (strain ATCC 700860 / DSM 12428 / JCM 9974 / NBRC 100139 / OT-3).